The sequence spans 223 residues: ATP phosphoribosyltransferase (223 aa).

Belongs to the ATP phosphoribosyltransferase family. Short subfamily. As to quaternary structure, heteromultimer composed of HisG and HisZ subunits.

Its subcellular location is the cytoplasm. It catalyses the reaction 1-(5-phospho-beta-D-ribosyl)-ATP + diphosphate = 5-phospho-alpha-D-ribose 1-diphosphate + ATP. Its pathway is amino-acid biosynthesis; L-histidine biosynthesis; L-histidine from 5-phospho-alpha-D-ribose 1-diphosphate: step 1/9. In terms of biological role, catalyzes the condensation of ATP and 5-phosphoribose 1-diphosphate to form N'-(5'-phosphoribosyl)-ATP (PR-ATP). Has a crucial role in the pathway because the rate of histidine biosynthesis seems to be controlled primarily by regulation of HisG enzymatic activity. The sequence is that of ATP phosphoribosyltransferase from Bordetella bronchiseptica (strain ATCC BAA-588 / NCTC 13252 / RB50) (Alcaligenes bronchisepticus).